Reading from the N-terminus, the 254-residue chain is Segregation and condensation protein A (254 aa).

The protein belongs to the ScpA family. As to quaternary structure, component of a cohesin-like complex composed of ScpA, ScpB and the Smc homodimer, in which ScpA and ScpB bind to the head domain of Smc. The presence of the three proteins is required for the association of the complex with DNA.

Its subcellular location is the cytoplasm. Functionally, participates in chromosomal partition during cell division. May act via the formation of a condensin-like complex containing Smc and ScpB that pull DNA away from mid-cell into both cell halves. The chain is Segregation and condensation protein A from Brevibacillus brevis (strain 47 / JCM 6285 / NBRC 100599).